We begin with the raw amino-acid sequence, 504 residues long: Carnosic acid synthase (504 aa).

Residues 4–24 form a helical membrane-spanning segment; sequence FIILSLAFIAAWVVYSRWSEY. Heme is bound at residue cysteine 447.

It belongs to the cytochrome P450 family. Heme serves as cofactor. Expressed in glandular trichomes of young leaves.

Its subcellular location is the membrane. It carries out the reaction 11-hydroxyferruginol + 3 reduced [NADPH--hemoprotein reductase] + 3 O2 = carnosate + 3 oxidized [NADPH--hemoprotein reductase] + 4 H2O + 4 H(+). The enzyme catalyses miltiradiene + 2 reduced [NADPH--hemoprotein reductase] + 2 O2 = miltiradien-20-al + 2 oxidized [NADPH--hemoprotein reductase] + 3 H2O + 2 H(+). It catalyses the reaction ferruginol + 3 reduced [NADPH--hemoprotein reductase] + 3 O2 = pisiferate + 3 oxidized [NADPH--hemoprotein reductase] + 4 H2O + 4 H(+). The protein operates within secondary metabolite biosynthesis; terpenoid biosynthesis. In terms of biological role, monooxygenase involved in the biosynthesis of carnosate, a potent antioxidant labdane-related diterpene natural products. Catalyzes the oxidation of 11-hydroxyferruginol to produce carnosate. Mediates the conversion of miltiradien into miltiradien-20-al. Also involved in the production of pisiferic acid and derivative products from ferruginol. The protein is Carnosic acid synthase of Rosmarinus officinalis (Rosemary).